We begin with the raw amino-acid sequence, 519 residues long: RxLR effector protein PITG_15278 (519 aa).

The signal sequence occupies residues Met1–Ala24. A RxLR-dEER motif is present at residues Arg49–Arg59.

This sequence belongs to the RxLR effector family.

Its subcellular location is the secreted. The protein resides in the host cytoplasm. Functionally, effector that enhances P.infestans colonization of Nicotiana benthamiana leaves. The protein is RxLR effector protein PITG_15278 of Phytophthora infestans (strain T30-4) (Potato late blight agent).